Reading from the N-terminus, the 273-residue chain is Alkaline ceramidase 1 (273 aa).

Residues 1-36 are Lumenal-facing; that stretch reads MHVPGTRAKMSSIFAYQSSEVDWCESNFQHSELVAE. Residues Asp22, Trp23, Glu25, Asn27, and Glu36 each contribute to the Ca(2+) site. The helical transmembrane segment at 37–57 threads the bilayer; it reads FYNTFSNVFFLIFGPLMMFLM. The Cytoplasmic portion of the chain corresponds to 58–72; the sequence is HPYAQKRTRCFYGVS. 2 helical membrane passes run 73 to 93 and 94 to 114; these read VLFM…SFLG and QLLD…VWLP. His86 contributes to the Zn(2+) binding site. Residues 115 to 126 are Cytoplasmic-facing; sequence RCYFPKFVKGNR. Residues 127-147 traverse the membrane as a helical segment; sequence FYFSCLVTITTIISTFLTFVK. The Lumenal portion of the chain corresponds to 148–149; the sequence is PT. The chain crosses the membrane as a helical span at residues 150 to 167; that stretch reads VNAYALNSIAIHILYIVR. Residues 168–177 lie on the Cytoplasmic side of the membrane; it reads TEYKKIRDDD. A helical membrane pass occupies residues 178-198; the sequence is LRHLIAVSVVLWAAALTSWIS. At 199 to 215 the chain is on the lumenal side; sequence DRVLCSFWQRIHFYYLH. Zn(2+)-binding residues include His215 and His219. A helical membrane pass occupies residues 216 to 236; sequence SIWHVLISITFPYGIVTMALV. The Cytoplasmic segment spans residues 237-273; that stretch reads DAKYEMPDKTLKVHYWPRDSWVIGLPYVEIQENDKNC.

The protein belongs to the alkaline ceramidase family. The cofactor is Zn(2+). In terms of tissue distribution, highly expressed in skin. Weakly or not expressed in other tissues. Expressed by granular layer of interfollicular epidermis, sebaceous glands and infundibulum.

Its subcellular location is the endoplasmic reticulum membrane. It carries out the reaction an N-acylsphing-4-enine + H2O = sphing-4-enine + a fatty acid. The catalysed reaction is N-tetracosanoyl-sphing-4-enine + H2O = tetracosanoate + sphing-4-enine. The enzyme catalyses an N-acylsphinganine + H2O = sphinganine + a fatty acid. It catalyses the reaction N-(9Z-octadecenoyl)-sphing-4-enine + H2O = sphing-4-enine + (9Z)-octadecenoate. It carries out the reaction N-(15Z-tetracosenoyl)-sphing-4-enine + H2O = (15Z)-tetracosenoate + sphing-4-enine. It participates in lipid metabolism; sphingolipid metabolism. With respect to regulation, inhibited by sphingosine. Inhibited by Mn(2+), Zn(2+), and Cu(2+) in a dose-dependent manner. Slightly activated by Ca(2+) in a dose-dependent manner. Functionally, endoplasmic reticulum ceramidase that catalyzes the hydrolysis of ceramides into sphingosine and free fatty acids at alkaline pH. Ceramides, sphingosine, and its phosphorylated form sphingosine-1-phosphate are bioactive lipids that mediate cellular signaling pathways regulating several biological processes including cell proliferation, apoptosis and differentiation. Exhibits a strong substrate specificity towards the natural stereoisomer of ceramides with D-erythro-sphingosine as a backbone and has a higher activity towards very long-chain unsaturated fatty acids like the C24:1-ceramide. May also hydrolyze dihydroceramides to produce dihydrosphingosine. ACER1 is a skin-specific ceramidase that regulates the levels of ceramides, sphingosine and sphingosine-1-phosphate in the epidermis, mediates the calcium-induced differentiation of epidermal keratinocytes and more generally plays an important role in skin homeostasis. The sequence is that of Alkaline ceramidase 1 from Mus musculus (Mouse).